The following is a 1768-amino-acid chain: Callose synthase 11 (1768 aa).

At 1 to 308 (MRRQRPSVAT…WNVYRSFDRL (308 aa)) the chain is on the cytoplasmic side. A helical transmembrane segment spans residues 309–329 (WILLLLYLQAAIIVATSDVKF). The Extracellular portion of the chain corresponds to 330–335 (PWQDRD). Residues 336–356 (VEVALLTVFISWAGLRLLQSV) traverse the membrane as a helical segment. Residues 357 to 370 (LDASTQYSLVSRET) lie on the Cytoplasmic side of the membrane. The helical transmembrane segment at 371 to 391 (YWLFIRLTLKFVVAVAWTVLF) threads the bilayer. Topologically, residues 392–421 (SVFYARIWSQKNKDGVWSRAANERVVTFLK) are extracellular. Residues 422–442 (VVFVYVIPELLALVLFIVPCI) traverse the membrane as a helical segment. Over 443–480 (RNWVEELNLGVVYFLTWWFYSKTFVGRGMREGLVDNVK) the chain is Cytoplasmic. Residues 481-501 (YTLFWIIVLATKFIFSYFLQI) traverse the membrane as a helical segment. The Extracellular segment spans residues 502–530 (RPLIAPTRALLNLKDATYNWHEFFGSTHR). The chain crosses the membrane as a helical span at residues 531 to 551 (IAVGMLWLPVILVYLMDLQIW). Residues 552-1341 (YSIYSSLVGA…FFRMLSFFYT (790 aa)) lie on the Cytoplasmic side of the membrane. The chain crosses the membrane as a helical span at residues 1342–1362 (TVGYYFNTMLIVFTVYAFLWG). Residues 1363–1386 (RLYLALSGVEKIAKDRSSSNEALG) are Extracellular-facing. The helical transmembrane segment at 1387–1407 (AILNQQFIIQLGLFTALPMIL) threads the bilayer. The Cytoplasmic portion of the chain corresponds to 1408–1413 (ENSLER). Residues 1414-1434 (GFLPAVWDFITMQLQLASFFY) form a helical membrane-spanning segment. At 1435 to 1481 (TFSMGTRTHYFGRTILHGGAKYRATGRGFVVEHKKFAENYRLYARTH) the chain is on the extracellular side. The chain crosses the membrane as a helical span at residues 1482–1502 (FIKAIELAIILLVYAAYSPLA). Residues 1503–1508 (KSSFVY) lie on the Cytoplasmic side of the membrane. A helical membrane pass occupies residues 1509-1529 (ILMTISSWFLITSWIISPFLF). Residues 1530–1583 (NPSGFDWLKTVNDFDDFIAWLWSRGGLFTKADQSWFTWWNEEQEHLKTTGVWGK) lie on the Extracellular side of the membrane. Residues 1584 to 1604 (LLEIILDLRFFFFQYSIVYHL) form a helical membrane-spanning segment. Residues 1605–1612 (RIAENRTS) lie on the Cytoplasmic side of the membrane. Residues 1613-1633 (IGVYLISWGCIIGIVAIYITT) form a helical membrane-spanning segment. The Extracellular portion of the chain corresponds to 1634–1649 (IYAQKRYSVKEHIKYR). The helical transmembrane segment at 1650–1670 (FIQFLVILLTVLVVVMMLQFT) threads the bilayer. At 1671 to 1673 (KLT) the chain is on the cytoplasmic side. A helical membrane pass occupies residues 1674-1694 (VVDLLISLLAFVPTGWGLISI). Residues 1695-1719 (AQVLKPFLLSTVVWDTVISVARFYD) lie on the Extracellular side of the membrane. Residues 1720–1740 (LFFGLIVMAPVALLSWLPGFQ) traverse the membrane as a helical segment. At 1741 to 1768 (NMQTRILFNEAFSRGLQISIILAGKKST) the chain is on the cytoplasmic side.

Belongs to the glycosyltransferase 48 family. In terms of tissue distribution, ubiquitous.

Its subcellular location is the cell membrane. It carries out the reaction [(1-&gt;3)-beta-D-glucosyl](n) + UDP-alpha-D-glucose = [(1-&gt;3)-beta-D-glucosyl](n+1) + UDP + H(+). Functionally, required the formation of the callose wall separating the tetraspores (interstitial wall), but not for the callose wall surrounding the pollen mother cells (peripheral wall). Functionally redudant to CALS12 (GSL5). During plant growth and development, callose is found as a transitory component of the cell plate in dividing cells, is a major component of pollen mother cell walls and pollen tubes, and is found as a structural component of plasmodesmatal canals. The polypeptide is Callose synthase 11 (CALS11) (Arabidopsis thaliana (Mouse-ear cress)).